The primary structure comprises 427 residues: 3-phosphoshikimate 1-carboxyvinyltransferase (427 aa).

3-phosphoshikimate is bound by residues lysine 22, serine 23, and arginine 27. Residue lysine 22 coordinates phosphoenolpyruvate. Residues glycine 96 and arginine 124 each contribute to the phosphoenolpyruvate site. Residues serine 170, serine 171, glutamine 172, serine 198, aspartate 314, asparagine 337, and lysine 341 each coordinate 3-phosphoshikimate. Residue glutamine 172 coordinates phosphoenolpyruvate. Catalysis depends on aspartate 314, which acts as the Proton acceptor. Phosphoenolpyruvate-binding residues include arginine 345, arginine 387, and lysine 412.

It belongs to the EPSP synthase family. Monomer.

The protein resides in the cytoplasm. The enzyme catalyses 3-phosphoshikimate + phosphoenolpyruvate = 5-O-(1-carboxyvinyl)-3-phosphoshikimate + phosphate. The protein operates within metabolic intermediate biosynthesis; chorismate biosynthesis; chorismate from D-erythrose 4-phosphate and phosphoenolpyruvate: step 6/7. Its function is as follows. Catalyzes the transfer of the enolpyruvyl moiety of phosphoenolpyruvate (PEP) to the 5-hydroxyl of shikimate-3-phosphate (S3P) to produce enolpyruvyl shikimate-3-phosphate and inorganic phosphate. The sequence is that of 3-phosphoshikimate 1-carboxyvinyltransferase from Tolumonas auensis (strain DSM 9187 / NBRC 110442 / TA 4).